Reading from the N-terminus, the 298-residue chain is Probable alpha-L-glutamate ligase (298 aa).

In terms of domain architecture, ATP-grasp spans 108 to 290 (LQLLLKTGVP…IAAEIIDYIE (183 aa)). ATP-binding positions include Lys-144, 181 to 182 (DF), Asp-190, and 214 to 216 (RAN). 3 residues coordinate Mg(2+): Asp-251, Glu-263, and Asn-265. Residues Asp-251, Glu-263, and Asn-265 each contribute to the Mn(2+) site.

The protein belongs to the RimK family. Mg(2+) is required as a cofactor. The cofactor is Mn(2+).

The chain is Probable alpha-L-glutamate ligase from Haemophilus influenzae (strain PittEE).